Reading from the N-terminus, the 200-residue chain is Elongation factor Ts (200 aa).

The tract at residues 81 to 84 (TDFV) is involved in Mg(2+) ion dislocation from EF-Tu.

The protein belongs to the EF-Ts family.

Its subcellular location is the cytoplasm. In terms of biological role, associates with the EF-Tu.GDP complex and induces the exchange of GDP to GTP. It remains bound to the aminoacyl-tRNA.EF-Tu.GTP complex up to the GTP hydrolysis stage on the ribosome. This chain is Elongation factor Ts, found in Nitratidesulfovibrio vulgaris (strain DSM 19637 / Miyazaki F) (Desulfovibrio vulgaris).